Here is a 176-residue protein sequence, read N- to C-terminus: Dual-action ribosomal maturation protein DarP (176 aa).

Belongs to the DarP family.

Its subcellular location is the cytoplasm. Member of a network of 50S ribosomal subunit biogenesis factors which assembles along the 30S-50S interface, preventing incorrect 23S rRNA structures from forming. Promotes peptidyl transferase center (PTC) maturation. The sequence is that of Dual-action ribosomal maturation protein DarP from Haemophilus ducreyi (strain 35000HP / ATCC 700724).